A 337-amino-acid polypeptide reads, in one-letter code: LIX1-like protein (337 aa).

The interval 1-64 (METMRAQRLQ…PLLLSGAPGL (64 aa)) is disordered. The span at 26 to 38 (PGVTGAAAATATP) shows a compositional bias: low complexity. Over residues 39-56 (PAGPPPAPPPPAPPPPPL) the composition is skewed to pro residues.

This sequence belongs to the LIX1 family.

This chain is LIX1-like protein (LIX1L), found in Homo sapiens (Human).